The primary structure comprises 252 residues: Small ribosomal subunit protein uS3 (252 aa).

One can recognise a KH type-2 domain in the interval isoleucine 39–valine 109. Residues methionine 222 to serine 240 show a composition bias toward basic and acidic residues. The interval methionine 222 to alanine 252 is disordered. Basic residues predominate over residues arginine 241–alanine 252.

Belongs to the universal ribosomal protein uS3 family. Part of the 30S ribosomal subunit. Forms a tight complex with proteins S10 and S14.

Functionally, binds the lower part of the 30S subunit head. Binds mRNA in the 70S ribosome, positioning it for translation. The polypeptide is Small ribosomal subunit protein uS3 (Chlorobium phaeobacteroides (strain BS1)).